The chain runs to 324 residues: Quinolinate synthase (324 aa).

Residues His-39 and Ser-56 each coordinate iminosuccinate. Cys-101 is a [4Fe-4S] cluster binding site. Iminosuccinate is bound by residues 127-129 and Ser-144; that span reads YIN. Residue Cys-187 participates in [4Fe-4S] cluster binding. Residues 213 to 215 and Thr-230 each bind iminosuccinate; that span reads HPE. [4Fe-4S] cluster is bound at residue Cys-280.

This sequence belongs to the quinolinate synthase family. Type 2 subfamily. It depends on [4Fe-4S] cluster as a cofactor.

It is found in the cytoplasm. The enzyme catalyses iminosuccinate + dihydroxyacetone phosphate = quinolinate + phosphate + 2 H2O + H(+). Its pathway is cofactor biosynthesis; NAD(+) biosynthesis; quinolinate from iminoaspartate: step 1/1. Catalyzes the condensation of iminoaspartate with dihydroxyacetone phosphate to form quinolinate. The sequence is that of Quinolinate synthase from Trichormus variabilis (strain ATCC 29413 / PCC 7937) (Anabaena variabilis).